We begin with the raw amino-acid sequence, 887 residues long: Alanine--tRNA ligase (887 aa).

H581, H585, C683, and H687 together coordinate Zn(2+).

This sequence belongs to the class-II aminoacyl-tRNA synthetase family. The cofactor is Zn(2+).

The protein resides in the cytoplasm. The catalysed reaction is tRNA(Ala) + L-alanine + ATP = L-alanyl-tRNA(Ala) + AMP + diphosphate. Functionally, catalyzes the attachment of alanine to tRNA(Ala) in a two-step reaction: alanine is first activated by ATP to form Ala-AMP and then transferred to the acceptor end of tRNA(Ala). Also edits incorrectly charged Ser-tRNA(Ala) and Gly-tRNA(Ala) via its editing domain. This Ehrlichia chaffeensis (strain ATCC CRL-10679 / Arkansas) protein is Alanine--tRNA ligase.